Here is a 514-residue protein sequence, read N- to C-terminus: Protein spinster homolog 3 (514 aa).

Residues methionine 1 to glycine 22 form a disordered region. Over residues glutamine 9–glycine 21 the composition is skewed to low complexity. 12 helical membrane-spanning segments follow: residues valine 54–leucine 74, glycine 88–leucine 108, alanine 116–serine 136, phenylalanine 149–phenylalanine 169, cysteine 176–glycine 196, leucine 212–proline 232, phenylalanine 264–tryptophan 284, leucine 313–alanine 333, leucine 347–alanine 367, valine 376–leucine 396, valine 415–leucine 435, and serine 453–leucine 473. A disordered region spans residues alanine 482–glutamate 514. Polar residues predominate over residues serine 497–glutamate 514.

It belongs to the major facilitator superfamily. Spinster (TC 2.A.1.49) family.

Its subcellular location is the membrane. Functionally, sphingolipid transporter. This Mus musculus (Mouse) protein is Protein spinster homolog 3 (Spns3).